Here is a 222-residue protein sequence, read N- to C-terminus: Probable nicotinate-nucleotide adenylyltransferase (222 aa).

This sequence belongs to the NadD family.

It carries out the reaction nicotinate beta-D-ribonucleotide + ATP + H(+) = deamido-NAD(+) + diphosphate. Its pathway is cofactor biosynthesis; NAD(+) biosynthesis; deamido-NAD(+) from nicotinate D-ribonucleotide: step 1/1. In terms of biological role, catalyzes the reversible adenylation of nicotinate mononucleotide (NaMN) to nicotinic acid adenine dinucleotide (NaAD). In Pseudomonas syringae pv. tomato (strain ATCC BAA-871 / DC3000), this protein is Probable nicotinate-nucleotide adenylyltransferase.